The primary structure comprises 312 residues: Malate dehydrogenase (312 aa).

Residues Gly-7–Gly-13 and Asp-34 contribute to the NAD(+) site. Substrate is bound by residues Arg-81 and Arg-87. Residues Asn-94 and Ile-117–Asn-119 each bind NAD(+). The substrate site is built by Asn-119 and Arg-153. Residue His-177 is the Proton acceptor of the active site. Met-227 contributes to the NAD(+) binding site.

The protein belongs to the LDH/MDH superfamily. MDH type 1 family. As to quaternary structure, homodimer.

The catalysed reaction is (S)-malate + NAD(+) = oxaloacetate + NADH + H(+). Functionally, catalyzes the reversible oxidation of malate to oxaloacetate. This is Malate dehydrogenase from Citrobacter koseri (strain ATCC BAA-895 / CDC 4225-83 / SGSC4696).